We begin with the raw amino-acid sequence, 473 residues long: Siroheme synthase (473 aa).

The segment at 1 to 203 (MQYLPIFTKL…GDTQAAEQQL (203 aa)) is precorrin-2 dehydrogenase /sirohydrochlorin ferrochelatase. NAD(+)-binding positions include 22–23 (DV) and 43–44 (PK). The residue at position 128 (Ser128) is a Phosphoserine. A uroporphyrinogen-III C-methyltransferase region spans residues 215-473 (GEVYVVGAGP…SFAQPLTDVA (259 aa)). Residue Pro224 coordinates S-adenosyl-L-methionine. Catalysis depends on Asp247, which acts as the Proton acceptor. The active-site Proton donor is Lys269. S-adenosyl-L-methionine is bound by residues 300–302 (GGD), Ile305, 330–331 (TA), Met382, and Gly411.

It in the N-terminal section; belongs to the precorrin-2 dehydrogenase / sirohydrochlorin ferrochelatase family. In the C-terminal section; belongs to the precorrin methyltransferase family.

The catalysed reaction is uroporphyrinogen III + 2 S-adenosyl-L-methionine = precorrin-2 + 2 S-adenosyl-L-homocysteine + H(+). The enzyme catalyses precorrin-2 + NAD(+) = sirohydrochlorin + NADH + 2 H(+). It carries out the reaction siroheme + 2 H(+) = sirohydrochlorin + Fe(2+). The protein operates within cofactor biosynthesis; adenosylcobalamin biosynthesis; precorrin-2 from uroporphyrinogen III: step 1/1. It participates in cofactor biosynthesis; adenosylcobalamin biosynthesis; sirohydrochlorin from precorrin-2: step 1/1. It functions in the pathway porphyrin-containing compound metabolism; siroheme biosynthesis; precorrin-2 from uroporphyrinogen III: step 1/1. Its pathway is porphyrin-containing compound metabolism; siroheme biosynthesis; siroheme from sirohydrochlorin: step 1/1. The protein operates within porphyrin-containing compound metabolism; siroheme biosynthesis; sirohydrochlorin from precorrin-2: step 1/1. Its function is as follows. Multifunctional enzyme that catalyzes the SAM-dependent methylations of uroporphyrinogen III at position C-2 and C-7 to form precorrin-2 via precorrin-1. Then it catalyzes the NAD-dependent ring dehydrogenation of precorrin-2 to yield sirohydrochlorin. Finally, it catalyzes the ferrochelation of sirohydrochlorin to yield siroheme. In Pseudoalteromonas translucida (strain TAC 125), this protein is Siroheme synthase.